A 337-amino-acid chain; its full sequence is Hsp90 co-chaperone Cdc37-like 1 (337 aa).

A compositionally biased stretch (pro residues) spans 1–11 (MEQPWPPPGPW). A disordered region spans residues 1-43 (MEQPWPPPGPWSLPRAEGEAEEESDLDLSPGSPRCPQLPGGGT). The self-association stretch occupies residues 2 to 171 (EQPWPPPGPW…HEQKIRHFGM (170 aa)). 2 positions are modified to phosphoserine: Ser32 and Ser88. Residues 84-122 (HNSESLDQEHAKAQTAISELRQREEEWRQKEEALVQRER) are a coiled coil. Residues 147 to 277 (KETEDEDKSK…SRVRLYSQSP (131 aa)) form a self-association and interaction with Hsp90 region. The interval 267–337 (KSRVRLYSQS…DDEPKMMDTV (71 aa)) is interaction with Hsp70. A required for interaction with STIP1 region spans residues 278-337 (NFQPVTVQNHVPHSGVGSIGLLESLPQNPDYLQYSINTALCSLNSVVHKEDDEPKMMDTV).

The protein belongs to the CDC37 family. In terms of assembly, self-associates. Forms complexes with Hsp70 and Hsp90. Interacts with CDC37, FKBP4, PPID and STIP1.

It is found in the cytoplasm. In terms of biological role, co-chaperone that binds to numerous proteins and promotes their interaction with Hsp70 and Hsp90. The polypeptide is Hsp90 co-chaperone Cdc37-like 1 (CDC37L1) (Bos taurus (Bovine)).